Reading from the N-terminus, the 1478-residue chain is Zinc finger protein 518A (1478 aa).

C2H2-type zinc fingers lie at residues 152–174 (FPCEMCSFSASDFQIFKQHRKTH), 209–231 (FQCEECRFFTQDVGTFVQHIHRH), 236–258 (YKCGKCHHLCFTKGELQKHLRVH), and 264–287 (FTCHYCSYGAIHKDQLVRHVITLH). The segment at 355 to 394 (TQTKSEDQSQEQLNEEKGGRQHCEDGDKPIESGSEKATVL) is disordered. Lys358 participates in a covalent cross-link: Glycyl lysine isopeptide (Lys-Gly) (interchain with G-Cter in SUMO2). The span at 368–388 (NEEKGGRQHCEDGDKPIESGS) shows a compositional bias: basic and acidic residues. Residues Lys390 and Lys428 each participate in a glycyl lysine isopeptide (Lys-Gly) (interchain with G-Cter in SUMO2) cross-link. The tract at residues 464-484 (PSPALQPNTEKESTANLPPQA) is disordered. Lys518 is covalently cross-linked (Glycyl lysine isopeptide (Lys-Gly) (interchain with G-Cter in SUMO2)). Residue Ser652 is modified to Phosphoserine. The disordered stretch occupies residues 656–694 (VCENLQRESSNKTVTQQSTSDSDTTSPLRKESSNSDSLL). Low complexity predominate over residues 670–681 (TQQSTSDSDTTS). Residues Lys707, Lys792, Lys882, Lys895, Lys987, Lys1008, Lys1041, Lys1055, Lys1078, Lys1180, and Lys1441 each participate in a glycyl lysine isopeptide (Lys-Gly) (interchain with G-Cter in SUMO2) cross-link. A C2H2-type 5 zinc finger spans residues 1444–1466 (FNCWFCGRVFDNQDVWAGHGQRH).

The protein belongs to the krueppel C2H2-type zinc-finger protein family.

It is found in the nucleus. In terms of biological role, through its association with the EHMT1-EHMT2/G9A and PRC2/EED-EZH2 histone methyltransferase complexes may function in gene silencing, regulating repressive post-translational methylation of histone tails at promoters of target genes. The polypeptide is Zinc finger protein 518A (Znf518a) (Rattus norvegicus (Rat)).